Reading from the N-terminus, the 401-residue chain is 1-deoxy-D-xylulose 5-phosphate reductoisomerase (401 aa).

7 residues coordinate NADPH: T11, G12, S13, I14, R38, N39, and N125. K126 is a binding site for 1-deoxy-D-xylulose 5-phosphate. E127 contributes to the NADPH binding site. D151 serves as a coordination point for Mn(2+). Residues S152, E153, S179, and H202 each coordinate 1-deoxy-D-xylulose 5-phosphate. Mn(2+) is bound at residue E153. G208 serves as a coordination point for NADPH. S215, N220, K221, and E224 together coordinate 1-deoxy-D-xylulose 5-phosphate. E224 is a Mn(2+) binding site.

Belongs to the DXR family. The cofactor is Mg(2+). Requires Mn(2+) as cofactor.

It carries out the reaction 2-C-methyl-D-erythritol 4-phosphate + NADP(+) = 1-deoxy-D-xylulose 5-phosphate + NADPH + H(+). It functions in the pathway isoprenoid biosynthesis; isopentenyl diphosphate biosynthesis via DXP pathway; isopentenyl diphosphate from 1-deoxy-D-xylulose 5-phosphate: step 1/6. Its function is as follows. Catalyzes the NADPH-dependent rearrangement and reduction of 1-deoxy-D-xylulose-5-phosphate (DXP) to 2-C-methyl-D-erythritol 4-phosphate (MEP). In Paraburkholderia xenovorans (strain LB400), this protein is 1-deoxy-D-xylulose 5-phosphate reductoisomerase.